Here is a 505-residue protein sequence, read N- to C-terminus: Cytochrome P450 76A2 (505 aa).

Residue C448 participates in heme binding.

It belongs to the cytochrome P450 family. It depends on heme as a cofactor.

The chain is Cytochrome P450 76A2 (CYP76A2) from Solanum melongena (Eggplant).